The primary structure comprises 323 residues: Deaminated glutathione amidase (323 aa).

A mitochondrion-targeting transit peptide spans 1–33 (MLGFITRPPHQLLCTGYRLLRTPVLCTQPRPRT). The CN hydrolase domain occupies 42–294 (LPLVAVCQVT…PGLCLARIDL (253 aa)). Residue glutamate 82 is the Proton acceptor of the active site. Lysine 157 (proton donor) is an active-site residue. Cysteine 199 functions as the Nucleophile in the catalytic mechanism.

It belongs to the carbon-nitrogen hydrolase superfamily. NIT1/NIT2 family. Expressed in most tissues with higher expression in adult liver and kidney as well as in fetal adrenal gland and skeletal muscle.

It is found in the mitochondrion. The protein localises to the cytoplasm. It catalyses the reaction N-(4-oxoglutaryl)-L-cysteinylglycine + H2O = L-cysteinylglycine + 2-oxoglutarate. The catalysed reaction is N-(4-carboxy-4-oxobutanoyl)-L-ethylglycylglycine + H2O = N-(2-aminobutanoyl)glycine + 2-oxoglutarate. In terms of biological role, catalyzes the hydrolysis of the amide bond in N-(4-oxoglutarate)-L-cysteinylglycine (deaminated glutathione), a metabolite repair reaction to dispose of the harmful deaminated glutathione. Possesses amidase activity toward deaminated ophthalmate in vitro. Plays a role in cell growth and apoptosis: loss of expression promotes cell growth, resistance to DNA damage stress and increased incidence to NMBA-induced tumors. Has tumor suppressor properties that enhances the apoptotic responsiveness in cancer cells; this effect is additive to the tumor suppressor activity of FHIT. It is also a negative regulator of primary T-cells. This is Deaminated glutathione amidase from Mus musculus (Mouse).